The sequence spans 501 residues: Ribose import ATP-binding protein RbsA (501 aa).

2 consecutive ABC transporter domains span residues L5–K241 and A252–L495. G37–S44 provides a ligand contact to ATP.

The protein belongs to the ABC transporter superfamily. Ribose importer (TC 3.A.1.2.1) family. The complex is composed of an ATP-binding protein (RbsA), two transmembrane proteins (RbsC) and a solute-binding protein (RbsB).

It is found in the cell inner membrane. The enzyme catalyses D-ribose(out) + ATP + H2O = D-ribose(in) + ADP + phosphate + H(+). In terms of biological role, part of the ABC transporter complex RbsABC involved in ribose import. Responsible for energy coupling to the transport system. The protein is Ribose import ATP-binding protein RbsA of Escherichia coli (strain UTI89 / UPEC).